A 409-amino-acid polypeptide reads, in one-letter code: Broad specificity amino-acid racemase (409 aa).

An N-terminal signal peptide occupies residues 1 to 24 (MPFRRTLLAASLALLITGQAPLYA). The cysteines at positions 71 and 97 are disulfide-linked. Lysine 75 serves as the catalytic Proton acceptor. The residue at position 75 (lysine 75) is an N6-(pyridoxal phosphate)lysine. Residue arginine 174 coordinates substrate. The Proton acceptor role is filled by tyrosine 301. A substrate-binding site is contributed by methionine 349.

The protein belongs to the alanine racemase family. Bsr subfamily. Requires pyridoxal 5'-phosphate as cofactor.

Its subcellular location is the periplasm. It catalyses the reaction an L-alpha-amino acid = a D-alpha-amino acid. The enzyme catalyses L-lysine = D-lysine. It carries out the reaction L-arginine = D-arginine. The catalysed reaction is L-glutamine = D-glutamine. Its function is as follows. Amino-acid racemase able to utilize a broad range of substrates. Reversibly racemizes 9 of the 19 natural chiral amino acids known, including both positively charged amino acids (Lys, Arg and His) and non-beta-branched aliphatic amino acids (Ala, Leu, Met, Ser, Gln and Asn). Among these amino acids, activity is the highest with lysine and arginine, and poor or very poor with the others. Plays a primary role in the catabolism of basic amino acid, that allows P.putida strain KT2440 to grow on L-Lys and L-Arg as the sole source of carbon and nitrogen, through conversion to their respective D-enantiomers. The polypeptide is Broad specificity amino-acid racemase (Pseudomonas putida (strain ATCC 47054 / DSM 6125 / CFBP 8728 / NCIMB 11950 / KT2440)).